The following is a 143-amino-acid chain: Large ribosomal subunit protein uL15 (143 aa).

The disordered stretch occupies residues 1–54; sequence MQLNSIKPAPGAKHPKRRVGRGIGSGLGKTAGRGHKGQKSRAGGFHKVGFEGGQ. The segment covering 21–31 has biased composition (gly residues); sequence RGIGSGLGKTA.

This sequence belongs to the universal ribosomal protein uL15 family. Part of the 50S ribosomal subunit.

In terms of biological role, binds to the 23S rRNA. In Nitrosospira multiformis (strain ATCC 25196 / NCIMB 11849 / C 71), this protein is Large ribosomal subunit protein uL15.